Here is a 268-residue protein sequence, read N- to C-terminus: Glutamate racemase (268 aa).

Substrate is bound by residues 14 to 15 (DS) and 46 to 47 (YG). Residue Cys78 is the Proton donor/acceptor of the active site. 79 to 80 (NT) serves as a coordination point for substrate. Residue Cys192 is the Proton donor/acceptor of the active site. Substrate is bound at residue 193–194 (TH).

This sequence belongs to the aspartate/glutamate racemases family.

It carries out the reaction L-glutamate = D-glutamate. The protein operates within cell wall biogenesis; peptidoglycan biosynthesis. Functionally, provides the (R)-glutamate required for cell wall biosynthesis. This is Glutamate racemase from Sphingopyxis alaskensis (strain DSM 13593 / LMG 18877 / RB2256) (Sphingomonas alaskensis).